A 416-amino-acid polypeptide reads, in one-letter code: N-acetyl-L-cysteine deacetylase (416 aa).

Cys-128, His-130, Glu-164, His-188, and His-380 together coordinate Zn(2+).

This sequence belongs to the peptidase M20 family. The cofactor is Zn(2+). Co(2+) serves as cofactor.

The catalysed reaction is N-acetyl-L-cysteine + H2O = L-cysteine + acetate. It participates in amino-acid metabolism. Functionally, involved in a cysteine salvage pathway from S-alkylcysteine. Catalyzes the last step in this pathway, i.e. the deacetylation of N-acetyl-L-cysteine. This pathway is likely important in the catabolism of alkylated cysteine generated by proteolysis of alkylated glutathione formed in the detoxification of a wide range of electrophiles. The polypeptide is N-acetyl-L-cysteine deacetylase (Bacillus subtilis (strain 168)).